The sequence spans 241 residues: E3 ubiquitin-protein ligase RNF166 (241 aa).

The interval 8-30 is disordered; it reads VASSQHRQHHSHQSLATPSSADS. Residues 37 to 77 form an RING-type zinc finger; it reads CPICLEVYYKPVAIGSCGHTFCGECLQPCLQVSSPLCPLCR. Zn(2+)-binding residues include cysteine 102, cysteine 105, histidine 117, and cysteine 121. The C2HC RNF-type zinc-finger motif lies at 102–121; the sequence is CRGCSKKVTLAKMRAHISSC. The region spanning 225–241 is the UIM domain; that stretch reads DEEAALQAALALSLSEN.

Its subcellular location is the cytoplasm. It catalyses the reaction S-ubiquitinyl-[E2 ubiquitin-conjugating enzyme]-L-cysteine + [acceptor protein]-L-lysine = [E2 ubiquitin-conjugating enzyme]-L-cysteine + N(6)-ubiquitinyl-[acceptor protein]-L-lysine.. The protein operates within protein modification; protein ubiquitination. In terms of biological role, E3 ubiquitin-protein ligase that promotes the ubiquitination of different substrates. The sequence is that of E3 ubiquitin-protein ligase RNF166 (rnf166) from Xenopus laevis (African clawed frog).